A 376-amino-acid polypeptide reads, in one-letter code: Drebrin-like protein B (376 aa).

The region spanning 2–133 (SVNLSKNGAA…EPESIMEKVA (132 aa)) is the ADF-H domain. Residues 175–231 (KENFWAKAEKDEEERRIEEHRRANVEKDRLERERKEREQREAEERERRFRERSKEID) are a coiled coil. A compositionally biased stretch (basic and acidic residues) spans 202 to 242 (DRLERERKEREQREAEERERRFRERSKEIDGHRKQQEEVEK). Positions 202–288 (DRLERERKER…FTASQQEEEN (87 aa)) are disordered. A compositionally biased stretch (polar residues) spans 268–283 (ESGSVSAQPEQFTASQ). Residues 317–376 (DSGMCARALYDYQAADDTEISFDPDDVIIQIEMIDDGWWRGVAPSGHFGMFPANYVELLE) enclose the SH3 domain.

The protein belongs to the ABP1 family.

It localises to the cytoplasm. The protein localises to the cytoskeleton. Its subcellular location is the cell projection. It is found in the lamellipodium. The protein resides in the ruffle. It localises to the cell cortex. The protein localises to the cytosol. Its subcellular location is the synapse. It is found in the perikaryon. The protein resides in the neuron projection. It localises to the cell membrane. The protein localises to the cytoplasmic vesicle. Its subcellular location is the clathrin-coated vesicle membrane. It is found in the golgi apparatus membrane. The protein resides in the podosome. It localises to the early endosome. The protein localises to the dendrite. Its subcellular location is the postsynaptic density. In terms of biological role, adapter protein that binds F-actin and dynamin, and thereby plays a role in receptor-mediated endocytosis. Plays a role in the reorganization of the actin cytoskeleton, formation of cell projections, such as neurites, in neuron morphogenesis and synapse formation. Does not bind G-actin and promote actin polymerization by itself, but excerts its functions by interaction with other proteins. Required for the formation of organized podosome rosettes. This Xenopus laevis (African clawed frog) protein is Drebrin-like protein B (dbnl-b).